Consider the following 386-residue polypeptide: Methionine import ATP-binding protein MetN 2 (386 aa).

An ABC transporter domain is found at 32–272; the sequence is VIFDDVGKVF…PQHDATRALL (241 aa). Residue 69–76 coordinates ATP; that stretch reads GRSGAGKS.

Belongs to the ABC transporter superfamily. Methionine importer (TC 3.A.1.24) family. As to quaternary structure, the complex is composed of two ATP-binding proteins (MetN), two transmembrane proteins (MetI) and a solute-binding protein (MetQ).

The protein localises to the cell inner membrane. It carries out the reaction L-methionine(out) + ATP + H2O = L-methionine(in) + ADP + phosphate + H(+). The catalysed reaction is D-methionine(out) + ATP + H2O = D-methionine(in) + ADP + phosphate + H(+). Functionally, part of the ABC transporter complex MetNIQ involved in methionine import. Responsible for energy coupling to the transport system. The polypeptide is Methionine import ATP-binding protein MetN 2 (Paraburkholderia xenovorans (strain LB400)).